A 286-amino-acid polypeptide reads, in one-letter code: MWQAISRLLSEQLGEGEIELRNELPGGEVHAAWHLRYAGHDFFVKCDERELLPGFTAEADQLELLSRSKTVTVPKVWAVGADRDYSFLVMDYLPPRPLDAHSAFILGQQIARLHQWSDQPQFGLDFDNALSTTPQPNTWQRRWSTFFAEQRIGWQLELAAEKGIAFGNIDAIVEHIQQRLASHQPQPSLLHGDLWSGNCALGPDGPYIFDPACYWGDRECDLAMLPLHTEQPPQIYDGYQSVSPLPADFLERQPVYQLYTLLNRARLFGGQHLVIAQQSLDRLLAA.

91–93 (DYL) contacts ATP. The active-site Proton acceptor is the D193.

The protein belongs to the fructosamine kinase family.

Its function is as follows. Ketoamine kinase that phosphorylates ketoamines on the third carbon of the sugar moiety to generate ketoamine 3-phosphate. Its precise substrate are unknown: does not have ribulosamine and/or erythrulosamine 3-kinase activity in vitro. The sequence is that of Probable ketoamine kinase YniA (yniA) from Escherichia coli (strain K12).